We begin with the raw amino-acid sequence, 605 residues long: Dynein axonemal intermediate chain 2 (605 aa).

WD repeat units follow at residues 150–203 (KTIN…IWDL), 208–246 (KPELALKPSSPLVTLEFNPKDSHVLLGGCYNGQIACWDT), 253–294 (AELS…WWDI), 301–347 (TEVV…SCNR), 355–393 (KIVCTFPGHHGPIYALQRNPFYPKNFLTVGDWTARIWSE), 399–437 (SIMWTKYHMAYLTDAAWSPVRPTVFFTTRMDGTLDIWDF), and 443–481 (DPTLSLKVCDEALFCLRVQDNGCLIACGSQLGTTTLLEV). The tract at residues 568–605 (IKLTPVPQQPSPEEDQVVEEGEEAAGEEGDEEVEEDLA) is disordered. Residues 579-605 (PEEDQVVEEGEEAAGEEGDEEVEEDLA) show a composition bias toward acidic residues.

The protein belongs to the dynein intermediate chain family. Consists of at least two heavy chains and a number of intermediate and light chains. Interacts with DNAAF2. Interacts with DNAAF6/PIH1D3. Interacts with HEATR2; probably involved in outer arm dynein assembly. Interacts with CFAP53. In terms of tissue distribution, highly expressed in trachea and testis. Expressed in respiratory ciliated cells (at protein level).

Its subcellular location is the cytoplasm. It is found in the cytoskeleton. The protein resides in the cilium axoneme. It localises to the dynein axonemal particle. Its function is as follows. Part of the dynein complex of respiratory cilia. The polypeptide is Dynein axonemal intermediate chain 2 (Homo sapiens (Human)).